A 102-amino-acid polypeptide reads, in one-letter code: Protamine-2 (102 aa).

Serine 8, serine 10, and serine 37 each carry phosphoserine. Disordered regions lie at residues 15-41 (EVYG…PEQV) and 66-102 (IHRQ…CRRH).

It belongs to the protamine P2 family. Interacts with TDRP. Post-translationally, proteolytic processing into mature chains is required for histone eviction during spermatogenesis. Transition proteins (TNP1 and TNP2) are required for processing. In terms of tissue distribution, testis.

It is found in the nucleus. The protein localises to the chromosome. Its function is as follows. Protamines substitute for histones in the chromatin of sperm during the haploid phase of spermatogenesis. They compact sperm DNA into a highly condensed, stable and inactive complex. In Pongo pygmaeus (Bornean orangutan), this protein is Protamine-2 (PRM2).